Consider the following 117-residue polypeptide: Prefoldin subunit beta (117 aa).

It belongs to the prefoldin subunit beta family. As to quaternary structure, heterohexamer of two alpha and four beta subunits.

Its subcellular location is the cytoplasm. Functionally, molecular chaperone capable of stabilizing a range of proteins. Seems to fulfill an ATP-independent, HSP70-like function in archaeal de novo protein folding. This is Prefoldin subunit beta from Pyrococcus furiosus (strain ATCC 43587 / DSM 3638 / JCM 8422 / Vc1).